Here is a 257-residue protein sequence, read N- to C-terminus: MPRYALKIEYDGAPFAGWQRQAVLPSVQGAIEAALGRLEPGPHTIAAAGRTDTGVHATGQVAHCDLGKDWDPFRLAGALNAHLKPLPVAVVAAARVGEDFHARFSAIERRYLFRLLARRAPEVHDRGRVWRVPHPLDGAAMREAAAHLVGRHDFTTFRAIGCQAASPVKTLDELTLETVEVPNGVEYRFRLRARSFLHNQVRSIVGTLERVGAGAWAPDRVKEALEARDRAACGPVCPPQGLYLTGVGYPADPFAAT.

Catalysis depends on D52, which acts as the Nucleophile. Y111 provides a ligand contact to substrate.

Belongs to the tRNA pseudouridine synthase TruA family. Homodimer.

It catalyses the reaction uridine(38/39/40) in tRNA = pseudouridine(38/39/40) in tRNA. Formation of pseudouridine at positions 38, 39 and 40 in the anticodon stem and loop of transfer RNAs. This chain is tRNA pseudouridine synthase A, found in Cereibacter sphaeroides (strain ATCC 17025 / ATH 2.4.3) (Rhodobacter sphaeroides).